The chain runs to 92 residues: MTRSLKKNPFVANNFLGKIEKLNMREEKEIIITWSRASTIIPTMIGHTIAIHNGKDHLPIYITDRMVGHKLGEFAPTLTFKGHARNDNRSRR.

This sequence belongs to the universal ribosomal protein uS19 family.

It localises to the plastid. It is found in the chloroplast. In terms of biological role, protein S19 forms a complex with S13 that binds strongly to the 16S ribosomal RNA. In Liriodendron tulipifera (Tuliptree), this protein is Small ribosomal subunit protein uS19c.